The chain runs to 175 residues: Putative metal-dependent hydrolase BPUM_0784 (175 aa).

The Zn(2+) site is built by His-65, His-157, and His-161.

It belongs to the metal hydrolase YfiT family. As to quaternary structure, homodimer. Zn(2+) serves as cofactor.

The protein localises to the cytoplasm. Possible metal-dependent hydrolase. This Bacillus pumilus (strain SAFR-032) protein is Putative metal-dependent hydrolase BPUM_0784.